A 150-amino-acid chain; its full sequence is Large ribosomal subunit protein bL9 (150 aa).

It belongs to the bacterial ribosomal protein bL9 family.

Functionally, binds to the 23S rRNA. This chain is Large ribosomal subunit protein bL9, found in Streptococcus equi subsp. equi (strain 4047).